Reading from the N-terminus, the 495-residue chain is Mesoderm induction early response protein 1 (495 aa).

Disordered stretches follow at residues 1–25 (MAEP…FEPS) and 76–131 (GSTV…PSFT). Positions 83–94 (GEEEEDEEDMDN) are enriched in acidic residues. The span at 120–130 (QSSNDDPTPSF) shows a compositional bias: polar residues. The region spanning 171 to 269 (KEIMVGSMFQ…EALRRLRFNV (99 aa)) is the ELM2 domain. The SANT domain occupies 274 to 326 (EELSVWTEEECRNFEQGLKAYGKDFHLIQANKVRTRSVGECVAFYYMWKKSER). 2 disordered regions span residues 356–397 (DESE…NGVS) and 416–495 (HLNG…HGEV). Composition is skewed to polar residues over residues 387–397 (TASNNTQNGVS) and 420–440 (PTIS…YNRE). The segment covering 462–476 (TNERPIKRQRMDSPG) has biased composition (basic and acidic residues). Residues 477–489 (KESTGSSEFSQEV) show a composition bias toward polar residues.

The protein resides in the nucleus. In terms of biological role, transcriptional repressor regulating the expression of a number of genes. Probably functions through recruitment of histone deacetylases involved in chromatin silencing. In Xenopus laevis (African clawed frog), this protein is Mesoderm induction early response protein 1 (mier1).